Consider the following 152-residue polypeptide: Putative polyketide cyclase (152 aa).

This sequence to polyketide cyclases.

It participates in antibiotic biosynthesis; curamycin biosynthesis. The polypeptide is Putative polyketide cyclase (curF) (Streptomyces cyaneus (Streptomyces curacoi)).